The sequence spans 203 residues: Urease accessory protein UreG (203 aa).

Position 12–19 (12–19 (GPVGSGKT)) interacts with GTP.

It belongs to the SIMIBI class G3E GTPase family. UreG subfamily. In terms of assembly, homodimer. UreD, UreF and UreG form a complex that acts as a GTP-hydrolysis-dependent molecular chaperone, activating the urease apoprotein by helping to assemble the nickel containing metallocenter of UreC. The UreE protein probably delivers the nickel.

The protein resides in the cytoplasm. In terms of biological role, facilitates the functional incorporation of the urease nickel metallocenter. This process requires GTP hydrolysis, probably effectuated by UreG. The chain is Urease accessory protein UreG from Nitrosococcus oceani (strain ATCC 19707 / BCRC 17464 / JCM 30415 / NCIMB 11848 / C-107).